Consider the following 632-residue polypeptide: Chaperone protein DnaK (632 aa).

The residue at position 199 (threonine 199) is a Phosphothreonine; by autocatalysis. Positions alanine 597–glutamate 611 are enriched in low complexity. The interval alanine 597–lysine 632 is disordered. Positions proline 612–alanine 621 are enriched in polar residues.

Belongs to the heat shock protein 70 family.

Its function is as follows. Acts as a chaperone. The protein is Chaperone protein DnaK of Amoebophilus asiaticus (strain 5a2).